Here is a 2221-residue protein sequence, read N- to C-terminus: MSECLTYFNELKDLVRKWVPDEDTYVEQKTVLLSQVNFSSIVTEGLKLLSTLIEVDSCVKHGCIHNRSKTVNQILYDHRIVGPTLPDVVPDGYRVSGSTLILLETFVRVNQESFECKYRHDFEKLMQLSKDLAKCGLTLVPVIDGRSSYYIERLPDWVIERMRWLLLRIMSNLRDSGEKIEEMEYERLVHSLSNMENQNLGLESLASLREEGLDYKTRLTKTLKEGIYSNMTTSECRVGIAKLYDHFCLLRDSGQYEDVYTTTSRSEMITWLKTHELVQMSSSERETLIEAETCKFCQIHMYAVLKDLVLLRKGWKGSRCRDANEILAHKSLLSDCNKIKGLKVLNTRRNTLLCLDIIVLNSLINLIKLQYTDLQYLINNHFKSVNDRLVSVDLIINKLDKKLTSDPNWLCKLRTKIGHKLKIYDLDHVISWLRPIEVSHWYEFKLERDNSGECVKPTIKYKKSGVGDCQGEDCNKDVITDDSTFSDYLDALSTLSMGLMNSMKTSSATKLVVNDERNYFGTVQCDECYFQDLDINYGTTLIYQKTGERTRCYGLMSKEGGGPDVYKVGKSFYADPKRYFLPIMSSEVILKMCREMLSWLDWLSEKEMMDVRTKLYTLVISILTVPSKRVQIYLQGFRYFIMAYVNEFHVKELVCKLKVKPLTRAELSVFTQMDDLVALLLTGTSEEHMTKSFKFILNLSYLCHLITKETPDRLTDQIKCFEKFLEPKLTFNSVILNLDSSPQLTEGTEEKIIGDLKKLFSKDLGVLDLKEPGVSKEVLSLCSSCFNNGMLSLPKVLSRDPQSPSFTSTALDISSNKSVVVPKLNEVGETITQYDYQSLLSSVVVEMAQSFKDKLRFKLDRRSLQYAIYKRLTNMVSKNEFRSKDDPNDSGILEDIEDLVDEGTHKLINEIEANVSDCLSKMSSGCNKSNQSSKGLKKFEKVDLLQKLWSREYMSLILSETSFHEVKDFDPSLLPSESYQEMCDAVYDSVYRNEFFTEKFLKLCPLELLIKNLATKHYEEGDYFECFKYLLIGAGCDNRVGRFDHRSRARLGFKDTATLVKEESRISSRESNSEAISKRLDKSFFTNSSLRNLCFYSEESPTYRSSVSSSVGKLKFGLSYKEQVGSNRELYIGDLNTKLTSRLIEDYFESLTSECRFSCLNNDSEFERALLDMKSVVRLSGLAVSLDHSKWGPYMSPAIFNALFSNLDLQLKDGGLIDKSPIENLLNWHLHKIVEVPYNVVEAYLKGYTKRSLGLMDRSSSSMTEDYFFRQFAKGVVPSHITSVLDMGQGILHNASDYYGLLTEQFITLCLELCFDVKMTAYTSSDDEIMLSNSYSLKRESDDDLLDMEKCKEILEFHYYLSSKLNKFISPKTVAGSFASEFKSRFFIWSQEVPLLTKFVAAALHNVKAKSPHQLAETIDTILDQCAANGVSIEIINELSKRTNRLISYSGHPVDPFLCVFTTDLKDWVDGSRGYRLQRSIESIINSEEILSTIRDSCRQLFYMIRSGRIQEEYLISALQSSPDDCLRQMLKITGTNDSLIEEALTTRWLNLRAFGDLRLVLRTKIMTGTRILDKEEVPSLIKSVQSKLSKNFVRGAKKIITDAINKSAFQSSICSGFIGLCKSMGSKCVRDGSGGFIYIKDLLKKIDRHTNCEVCCPLLSVFCEHSLRQVAPYSRPLLWDYFSLTFSNACELGNWVFSKVELPRPPLGSMNPNFFWPVKPGSHSELEDKVNMNHVLYSIKRNFPDLFDEHIAPFLSDLNSLKVSWVQRIKFLDLCVAMDMSSECLGIISHIMRKRREELYIVKQEELSVCHIRESCSLEKGLQLNSVEICQNFLTQLLFESMLNPVLLSTSQFKKYFWYGEVEFLPNDADHDLGQLTQFIMDCKLLNISRCMCLDDLDVGYVHSKIELSQVFINLSTFINLVDWENRESYQSFDEVLIHSNADHIPLEIGIILSHTRKSFKFRYERKTNYYVKCGITIQKSEISSFSTTLSDGFELHVEEIDCYVSGSEGDHISLDGVGLVPLHPLFSGKEALDLNKLLSDQDIEFKQISLVFSKVKLDFKDHVKDLKNKFSYKLQGPEQGLEPLHLDKGQIMERNTVVSRLEVPVTSRSLFLALEALDPGNRPRFLSSLHEYMRKRPGKKDPCFVRMTQQDLCLLVELYEAAFMQVLSAVSDWIEFGCFALCFSKTLNCIMIADDGGDYRLKGRPCKTLSAQKTLTDIE.

Residues lysine 29 to glutamate 292 form an endonuclease region. Mn(2+) contacts are provided by glutamate 54, aspartate 91, and glutamate 104. Lysine 117 is a catalytic residue. The RdRp catalytic domain occupies leucine 1171–isoleucine 1369. Residue aspartate 1327 participates in Mg(2+) binding.

This sequence belongs to the Bunyavirales RNA polymerase family. Homomultimer; the oligomeric structure is essential for the polymerase activity. Interacts with nucleoprotein N. Interacts with protein Z; this interaction inhibits viral transcription and replication, Z partially blocks the product exit tunnel for the releasing nascent RNA product. Mn(2+) is required as a cofactor. It depends on Mg(2+) as a cofactor.

It localises to the virion. It is found in the host cytoplasm. The catalysed reaction is RNA(n) + a ribonucleoside 5'-triphosphate = RNA(n+1) + diphosphate. Functionally, RNA-dependent RNA polymerase, which is responsible for the replication and transcription of the viral RNA genome using antigenomic RNA as an intermediate. During transcription, synthesizes subgenomic RNAs and assures their capping by a cap-snatching mechanism, which involves the endonuclease activity cleaving the host capped pre-mRNAs. These short capped RNAs are then used as primers for viral transcription. The 3'-end of subgenomic mRNAs molecules are heterogeneous and not polyadenylated. The replicase function is to direct synthesis of antigenomic and genomic RNA which are encapsidated and non capped. As a consequence of the use of the same enzyme for both transcription and replication, these mechanisms need to be well coordinated. These processes may be regulated by proteins N and Z in a dose-dependent manner. Z protein inhibits the viral polymerase L und thus the viral transcription and RNA synthesis. This is RNA-directed RNA polymerase L from Sigmodon hispidus (Hispid cotton rat).